Consider the following 302-residue polypeptide: Acetylglutamate kinase (302 aa).

Substrate is bound by residues 75–76 (GG), Arg97, and Asn198.

Belongs to the acetylglutamate kinase family. ArgB subfamily.

It is found in the cytoplasm. The catalysed reaction is N-acetyl-L-glutamate + ATP = N-acetyl-L-glutamyl 5-phosphate + ADP. The protein operates within amino-acid biosynthesis; L-arginine biosynthesis; N(2)-acetyl-L-ornithine from L-glutamate: step 2/4. Its function is as follows. Catalyzes the ATP-dependent phosphorylation of N-acetyl-L-glutamate. This is Acetylglutamate kinase from Leifsonia xyli subsp. xyli (strain CTCB07).